We begin with the raw amino-acid sequence, 367 residues long: Germination protease (367 aa).

Residues 1–15 constitute a propeptide that is removed on maturation; that stretch reads MKEPLDLSKYSIRTD.

Belongs to the peptidase A25 family. In terms of assembly, homotetramer. Post-translationally, autoproteolytically processed. The inactive tetrameric zymogen termed p46 autoprocesses to a smaller form termed p41, which is active only during spore germination.

It carries out the reaction Endopeptidase action with P4 Glu or Asp, P1 preferably Glu &gt; Asp, P1' hydrophobic and P2' Ala.. Initiates the rapid degradation of small, acid-soluble proteins during spore germination. This chain is Germination protease, found in Bacillus cereus (strain ATCC 14579 / DSM 31 / CCUG 7414 / JCM 2152 / NBRC 15305 / NCIMB 9373 / NCTC 2599 / NRRL B-3711).